The sequence spans 343 residues: MLQTDNLTAAQPQRIVAAQTASAQEELLERALRPKTLDDYIGQHKAKEQLAIFIQAAKKRGEALDHVLLFGPPGLGKTTLAHIIAKELGVNLRQTSGPVLERAGDLAALLTNLDPHDVLFIDEIHRLSPVVEEILYPALEDYRLDIMIGEGPAARSVKIDLPPFTLVGATTRAGMLTNPLRDRFGIVSRLEFYENRDLATIVSRSAQLLQLDMSEEGAEEIAKRSRGTPRIANRLLRRVRDFADVKNNGTIDGGIADAALSMLDVDVQGLDVMDRKFLEAVLHKFGGGPVGLDNVAAAIGESTDTIEDVIEPYLIQQGFLQRTPRGRMATERAYLHFGLPVEK.

The large ATPase domain (RuvB-L) stretch occupies residues 4–193 (TDNLTAAQPQ…FGIVSRLEFY (190 aa)). ATP contacts are provided by residues Leu32, Arg33, Gly74, Lys77, Thr78, Thr79, 140–142 (EDY), Arg183, Tyr193, and Arg230. Mg(2+) is bound at residue Thr78. Positions 194–264 (ENRDLATIVS…IADAALSMLD (71 aa)) are small ATPAse domain (RuvB-S). The tract at residues 267-343 (VQGLDVMDRK…YLHFGLPVEK (77 aa)) is head domain (RuvB-H). DNA contacts are provided by Arg322 and Arg327.

This sequence belongs to the RuvB family. As to quaternary structure, homohexamer. Forms an RuvA(8)-RuvB(12)-Holliday junction (HJ) complex. HJ DNA is sandwiched between 2 RuvA tetramers; dsDNA enters through RuvA and exits via RuvB. An RuvB hexamer assembles on each DNA strand where it exits the tetramer. Each RuvB hexamer is contacted by two RuvA subunits (via domain III) on 2 adjacent RuvB subunits; this complex drives branch migration. In the full resolvosome a probable DNA-RuvA(4)-RuvB(12)-RuvC(2) complex forms which resolves the HJ.

The protein localises to the cytoplasm. It catalyses the reaction ATP + H2O = ADP + phosphate + H(+). Functionally, the RuvA-RuvB-RuvC complex processes Holliday junction (HJ) DNA during genetic recombination and DNA repair, while the RuvA-RuvB complex plays an important role in the rescue of blocked DNA replication forks via replication fork reversal (RFR). RuvA specifically binds to HJ cruciform DNA, conferring on it an open structure. The RuvB hexamer acts as an ATP-dependent pump, pulling dsDNA into and through the RuvAB complex. RuvB forms 2 homohexamers on either side of HJ DNA bound by 1 or 2 RuvA tetramers; 4 subunits per hexamer contact DNA at a time. Coordinated motions by a converter formed by DNA-disengaged RuvB subunits stimulates ATP hydrolysis and nucleotide exchange. Immobilization of the converter enables RuvB to convert the ATP-contained energy into a lever motion, pulling 2 nucleotides of DNA out of the RuvA tetramer per ATP hydrolyzed, thus driving DNA branch migration. The RuvB motors rotate together with the DNA substrate, which together with the progressing nucleotide cycle form the mechanistic basis for DNA recombination by continuous HJ branch migration. Branch migration allows RuvC to scan DNA until it finds its consensus sequence, where it cleaves and resolves cruciform DNA. The protein is Holliday junction branch migration complex subunit RuvB of Neisseria meningitidis serogroup A / serotype 4A (strain DSM 15465 / Z2491).